A 209-amino-acid polypeptide reads, in one-letter code: Uracil phosphoribosyltransferase (209 aa).

5-phospho-alpha-D-ribose 1-diphosphate-binding positions include arginine 79, arginine 104, and 131-139 (DPMLATGVS). Uracil contacts are provided by residues isoleucine 194 and 199-201 (GDA). Aspartate 200 contacts 5-phospho-alpha-D-ribose 1-diphosphate.

The protein belongs to the UPRTase family. Mg(2+) is required as a cofactor.

The catalysed reaction is UMP + diphosphate = 5-phospho-alpha-D-ribose 1-diphosphate + uracil. It functions in the pathway pyrimidine metabolism; UMP biosynthesis via salvage pathway; UMP from uracil: step 1/1. Its activity is regulated as follows. Allosterically activated by GTP. Its function is as follows. Catalyzes the conversion of uracil and 5-phospho-alpha-D-ribose 1-diphosphate (PRPP) to UMP and diphosphate. This Thermotoga neapolitana (strain ATCC 49049 / DSM 4359 / NBRC 107923 / NS-E) protein is Uracil phosphoribosyltransferase.